The sequence spans 230 residues: Response regulator MprA (230 aa).

The 115-residue stretch at R4–L118 folds into the Response regulatory domain. D48 is subject to 4-aspartylphosphate. The ompR/PhoB-type DNA-binding region spans S129–E227.

Post-translationally, phosphorylated and dephosphorylated by MprB.

Its subcellular location is the cytoplasm. Its function is as follows. Member of the two-component regulatory system MprB/MprA which contributes to maintaining a balance among several systems involved in stress resistance and is required for establishment and maintenance of persistent infection in the host. Functions as a transcriptional regulator that recognizes a 19-bp nucleotide motif comprizing two loosely conserved 8-bp direct DNA-binding motif repeats separated by a 3-bp spacer region. This Mycobacterium sp. (strain JLS) protein is Response regulator MprA (mprA).